A 343-amino-acid polypeptide reads, in one-letter code: Lipase chaperone (343 aa).

Residues 7–27 (IYLGIGLVALLMIFIYWLMPK) traverse the membrane as a helical segment.

Belongs to the lipase chaperone family.

It is found in the cell inner membrane. In terms of biological role, may be involved in the folding of the extracellular lipase during its passage through the periplasm. The protein is Lipase chaperone (lifO) of Acinetobacter baylyi (strain ATCC 33305 / BD413 / ADP1).